An 83-amino-acid polypeptide reads, in one-letter code: Translational regulator CsrA (83 aa).

This sequence belongs to the CsrA/RsmA family. Homodimer; the beta-strands of each monomer intercalate to form a hydrophobic core, while the alpha-helices form wings that extend away from the core.

The protein resides in the cytoplasm. Functionally, a translational regulator that binds mRNA to regulate translation initiation and/or mRNA stability. Usually binds in the 5'-UTR at or near the Shine-Dalgarno sequence preventing ribosome-binding, thus repressing translation. Its main target seems to be the major flagellin gene, while its function is anatagonized by FliW. This is Translational regulator CsrA from Nocardioides sp. (strain ATCC BAA-499 / JS614).